We begin with the raw amino-acid sequence, 89 residues long: Small ribosomal subunit protein uS15 (89 aa).

The protein belongs to the universal ribosomal protein uS15 family. As to quaternary structure, part of the 30S ribosomal subunit. Forms a bridge to the 50S subunit in the 70S ribosome, contacting the 23S rRNA.

Functionally, one of the primary rRNA binding proteins, it binds directly to 16S rRNA where it helps nucleate assembly of the platform of the 30S subunit by binding and bridging several RNA helices of the 16S rRNA. Forms an intersubunit bridge (bridge B4) with the 23S rRNA of the 50S subunit in the ribosome. The polypeptide is Small ribosomal subunit protein uS15 (Streptococcus thermophilus (strain CNRZ 1066)).